Consider the following 488-residue polypeptide: MAGTLCVTLLLLLSTIAVGGRKTWRRRSQQIVPSSWERSEGGGESFPLDFTAVEGNMDNFMNQIKSLAQSLYPCSAQRLDDEMKLHSLHNKSVTCNDGSPAGYYLKESKGSRRWLVFLEGGWYCISRENCDIRYDTMRSLMSSRAWPPSKTASGILSTQPEENPHWWNANIVFIPYCSSDVWSGVSPKTEKSGYAFMGSLIIQEVVKELLGKGLDTAKLLLLAGSSAGGTGVLLNVDMVANLLEELGYPGIEVRGLSDSGWFLNNKQYWRTDCTDIITCAPTEAIQRGIRYWNSMVPERCKQQFKEGEEWNCFFGYKIYPTLRSPVFVVQWLFDEAQLTVDNVHLSRQPVQESQWLYIQNLGRELRNTLKDVGASFAPACLAHEVITRSHWTEIQVRGTSLPRALHCWDRSLQEPNKNSKVQLKGCPFHLMDSCPWPQCNPTCPSIRDHFTGQEMSVVQFLMHLGFDVQKMASQQGMEPGKLLGVLSS.

The first 19 residues, 1–19 (MAGTLCVTLLLLLSTIAVG), serve as a signal peptide directing secretion. Asn-90 is a glycosylation site (N-linked (GlcNAc...) asparagine). Active-site charge relay system residues include Ser-226, Asp-334, and His-383.

Belongs to the pectinacetylesterase family. Notum subfamily. In terms of tissue distribution, expressed in the egg and through cleavage to gastrulation stages. Enriched in the animal (prospective ectoderm) and dorsal regions in early gastrula. Shows a dynamic expression during embryogenesis, in particular during neural induction and antero-posterior (AP) patterning.

It is found in the secreted. It catalyses the reaction [Wnt protein]-O-(9Z)-hexadecenoyl-L-serine + H2O = [Wnt protein]-L-serine + (9Z)-hexadecenoate + H(+). Carboxylesterase that acts as a key negative regulator of the Wnt signaling pathway by specifically mediating depalmitoleoylation of WNT proteins. Serine palmitoleoylation of WNT proteins is required for efficient binding to frizzled receptors. Functions in the prospective ectoderm and is required for neural induction. The sequence is that of Palmitoleoyl-protein carboxylesterase notum1' from Xenopus laevis (African clawed frog).